Reading from the N-terminus, the 178-residue chain is Large ribosomal subunit protein uL6 (178 aa).

Belongs to the universal ribosomal protein uL6 family. In terms of assembly, part of the 50S ribosomal subunit.

This protein binds to the 23S rRNA, and is important in its secondary structure. It is located near the subunit interface in the base of the L7/L12 stalk, and near the tRNA binding site of the peptidyltransferase center. The chain is Large ribosomal subunit protein uL6 from Streptococcus suis (strain 05ZYH33).